The sequence spans 418 residues: Secernin-3 (418 aa).

A propeptide spanning residues 1–5 (MEPYS) is cleaved from the precursor. The active site involves C6. A Glyoxylic acid (Cys); alternate modification is found at C6. C6 is subject to Pyruvic acid (Cys); alternate.

It belongs to the peptidase C69 family. Secernin subfamily.

In terms of biological role, plays a role in thermal nociception. The sequence is that of Secernin-3 (Scrn3) from Mus musculus (Mouse).